The chain runs to 379 residues: Transcription factor bHLH122 (379 aa).

Residues 1 to 17 (MESEFQQHHFLLHDHQH) are compositionally biased toward basic and acidic residues. The interval 1 to 21 (MESEFQQHHFLLHDHQHQRPR) is disordered. Ser74 bears the Phosphoserine mark. Disordered stretches follow at residues 79 to 98 (TFNS…EDED), 133 to 156 (SVSR…ARHN), and 190 to 286 (TSNT…MSLP). The segment covering 84-93 (GTEKKPPEVK) has biased composition (basic and acidic residues). Positions 190-200 (TSNTEASSLTP) are enriched in polar residues. 2 positions are modified to phosphoserine: Ser213 and Ser234. Polar residues predominate over residues 235-261 (GGFNRSFGNEGSASSKLTALARTQSGG). The segment covering 265 to 274 (YKTKDEDSAS) has biased composition (basic and acidic residues). The bHLH domain occupies 310–360 (CATHPRSIAERVRRTKISERMRKLQDLVPNMDTQTNTADMLDLAVQYIKDL).

Homodimer.

Its subcellular location is the nucleus. This is Transcription factor bHLH122 (BHLH122) from Arabidopsis thaliana (Mouse-ear cress).